A 136-amino-acid chain; its full sequence is Small ribosomal subunit protein uS9 (136 aa).

A disordered region spans residues 97–136 (SPDNRKPLKTEGHLSRDPRAKERRKYGLKKARKAPQFSKR). A compositionally biased stretch (basic and acidic residues) spans 98–116 (PDNRKPLKTEGHLSRDPRA). Residues 117–136 (KERRKYGLKKARKAPQFSKR) show a composition bias toward basic residues.

The protein belongs to the universal ribosomal protein uS9 family.

This is Small ribosomal subunit protein uS9 from Prochlorococcus marinus (strain MIT 9215).